The following is a 287-amino-acid chain: Ribosomal RNA small subunit methyltransferase I (287 aa).

Belongs to the methyltransferase superfamily. RsmI family.

It is found in the cytoplasm. It carries out the reaction cytidine(1402) in 16S rRNA + S-adenosyl-L-methionine = 2'-O-methylcytidine(1402) in 16S rRNA + S-adenosyl-L-homocysteine + H(+). In terms of biological role, catalyzes the 2'-O-methylation of the ribose of cytidine 1402 (C1402) in 16S rRNA. In Helicobacter pylori (strain ATCC 700392 / 26695) (Campylobacter pylori), this protein is Ribosomal RNA small subunit methyltransferase I.